The sequence spans 447 residues: Tubulin beta-1 chain (447 aa).

Positions 11, 69, 138, 142, 143, 144, 204, and 226 each coordinate GTP. Glu69 is a Mg(2+) binding site. Positions 428–447 (ATADEDAEFDEEQEQEIEDN) are disordered. Residues 429-447 (TADEDAEFDEEQEQEIEDN) show a composition bias toward acidic residues.

The protein belongs to the tubulin family. Dimer of alpha and beta chains. A typical microtubule is a hollow water-filled tube with an outer diameter of 25 nm and an inner diameter of 15 nM. Alpha-beta heterodimers associate head-to-tail to form protofilaments running lengthwise along the microtubule wall with the beta-tubulin subunit facing the microtubule plus end conferring a structural polarity. Microtubules usually have 13 protofilaments but different protofilament numbers can be found in some organisms and specialized cells. Mg(2+) serves as cofactor.

Its subcellular location is the cytoplasm. It is found in the cytoskeleton. Functionally, tubulin is the major constituent of microtubules, a cylinder consisting of laterally associated linear protofilaments composed of alpha- and beta-tubulin heterodimers. Microtubules grow by the addition of GTP-tubulin dimers to the microtubule end, where a stabilizing cap forms. Below the cap, tubulin dimers are in GDP-bound state, owing to GTPase activity of alpha-tubulin. This is Tubulin beta-1 chain from Manduca sexta (Tobacco hawkmoth).